Here is a 470-residue protein sequence, read N- to C-terminus: Uronate isomerase (470 aa).

Belongs to the metallo-dependent hydrolases superfamily. Uronate isomerase family.

It carries out the reaction D-glucuronate = D-fructuronate. The enzyme catalyses aldehydo-D-galacturonate = keto-D-tagaturonate. It functions in the pathway carbohydrate metabolism; pentose and glucuronate interconversion. This Serratia proteamaculans (strain 568) protein is Uronate isomerase.